The primary structure comprises 390 residues: 2-oxoisovalerate dehydrogenase subunit beta, mitochondrial (390 aa).

Residues Met1–Arg48 constitute a mitochondrion transit peptide. Tyr150 is a binding site for thiamine diphosphate. K(+)-binding residues include Gly176, Leu178, Thr179, Cys226, and Asp229. Lys230 carries the N6-acetyllysine modification. Position 231 (Asn231) interacts with K(+). Lys239 is subject to N6-acetyllysine.

Heterotetramer of 2 alpha/BCKDHA and 2 beta chains/BCKDHB that forms the branched-chain alpha-keto acid decarboxylase (E1) component of the BCKD complex. The branched-chain alpha-ketoacid dehydrogenase is a large complex composed of three major building blocks E1, E2 and E3. It is organized around E2, a 24-meric cubic core composed of DBT, to which are associated 6 to 12 copies of E1, and approximately 6 copies of the dehydrogenase E3, a DLD dimer. Requires thiamine diphosphate as cofactor.

The protein resides in the mitochondrion matrix. It catalyses the reaction N(6)-[(R)-lipoyl]-L-lysyl-[protein] + 3-methyl-2-oxobutanoate + H(+) = N(6)-[(R)-S(8)-2-methylpropanoyldihydrolipoyl]-L-lysyl-[protein] + CO2. Functionally, together with BCKDHA forms the heterotetrameric E1 subunit of the mitochondrial branched-chain alpha-ketoacid dehydrogenase (BCKD) complex. The BCKD complex catalyzes the multi-step oxidative decarboxylation of alpha-ketoacids derived from the branched-chain amino-acids valine, leucine and isoleucine producing CO2 and acyl-CoA which is subsequently utilized to produce energy. The E1 subunit catalyzes the first step with the decarboxylation of the alpha-ketoacid forming an enzyme-product intermediate. A reductive acylation mediated by the lipoylamide cofactor of E2 extracts the acyl group from the E1 active site for the next step of the reaction. The polypeptide is 2-oxoisovalerate dehydrogenase subunit beta, mitochondrial (Mus musculus (Mouse)).